The primary structure comprises 514 residues: Uronyl 2-sulfotransferase homolog pip (514 aa).

Over 1–30 the chain is Cytoplasmic; it reads MSLNAERSYKMKLRDVENAFKYRRIPYPKR. A helical; Signal-anchor for type II membrane protein transmembrane segment spans residues 31 to 50; sequence SVELIALLAISCTFFLFMHT. Topologically, residues 51–514 are lumenal; that stretch reads NKLNSRLKEM…EQQNEYNEDY (464 aa). The segment covering 112–121 has biased composition (basic and acidic residues); that stretch reads HDRRSSEEQL. The interval 112–185 is disordered; it reads HDRRSSEEQL…DEDEVEENDD (74 aa). A compositionally biased stretch (basic residues) spans 127 to 140; that stretch reads HGHHHDHHSHHHHM. Basic and acidic residues predominate over residues 155–170; that stretch reads HDKQLAVPDNKHKEDE. Residues 171–185 are compositionally biased toward acidic residues; that stretch reads VHYEDDEDEVEENDD. Asn-207 is a glycosylation site (N-linked (GlcNAc...) asparagine). The active site involves His-282. N-linked (GlcNAc...) asparagine glycans are attached at residues Asn-287, Asn-416, Asn-451, and Asn-467.

Belongs to the sulfotransferase 3 family. Interacts with wbl/windbeutel; the interaction is direct and does not require pip to be folded. Ovary-specific. Specifically expressed in the ventral follicle cells of stage 9-10 egg chambers. In terms of tissue distribution, expressed in ovaries. Specifically expressed in the ventral follicle cells of stage 9-10 egg chambers.

It is found in the golgi apparatus membrane. Its function is as follows. Sulfotransferase involved in dorsoventral axis patterning in early embryos. Required for the ventral activation of ea/easter by the protease snk in the perivitelline space between the embryonic membrane and the eggshell; activation of ea requires both activation of the ndl-gd-snk protease cascade and sulfation of a vitelline membrane component by pip. Probably acts by mediating the sulfation of some glycoprotein or glycosaminoglycan stably deposited in the vitelline membrane, whose ventrally localized modification leads to spatially restricted activation of the protease cascade resulting in localized activation of the spz Toll receptor ligand by ea. Functionally, probably required redundantly with isoform H for dorsoventral axis patterning in embryos. Lacks 2-O-sulfotransferase activity towards completely desulfated N-sulfated (CDSNS) heparin, chondroitin, and chondroitin sulfate A, B (dermatan sulfate), and C. Sulfates several components of the eggshell vitelline membrane, including Vml, Vm26Aa, Vm32E and psd/palisade/Fcp26Aa. Probably required redundantly with isoform A for dorsoventral axis patterning in embryos. In terms of biological role, lacks 2-O-sulfotransferase activity towards CDSNS heparin, chondroitin, and chondroitin sulfate A, B (dermatan sulfate), and C. This is Uronyl 2-sulfotransferase homolog pip from Drosophila melanogaster (Fruit fly).